The following is a 409-amino-acid chain: Aspartic protease pepA (409 aa).

A signal peptide spans 1 to 19; that stretch reads MPSIVSLTAALTFVGAVIA. A propeptide spans 20-65 (activation peptide); it reads SPVEKRSAFSVEQVPHTTYLKNGPAQKVKTLRKYGKPVPQSLLDAA. Residues 97-404 form the Peptidase A1 domain; the sequence is YLSPVTVGST…PDSPPRIGLA (308 aa). Residues Asp113 and Asp293 contribute to the active site. The cysteines at positions 329 and 364 are disulfide-linked. A glycan (N-linked (GlcNAc...) asparagine) is linked at Asn335.

The protein belongs to the peptidase A1 family. Monomer.

It localises to the secreted. Functionally, secreted aspartic endopeptidase that allows assimilation of proteinaceous substrates. The scissile peptide bond is attacked by a nucleophilic water molecule activated by two aspartic residues in the active site. Shows a broad primary substrate specificity. Favors hydrophobic residues at the P1 and P1' positions. This is Aspartic protease pepA from Leptosphaeria maculans (strain JN3 / isolate v23.1.3 / race Av1-4-5-6-7-8) (Blackleg fungus).